Reading from the N-terminus, the 597-residue chain is Elongation factor 4 (597 aa).

Residues 2–184 enclose the tr-type G domain; sequence DHIRNFSIIA…ALIAKVPPPK (183 aa). Residues 14–19 and 131–134 each bind GTP; these read DHGKST and NKID.

This sequence belongs to the TRAFAC class translation factor GTPase superfamily. Classic translation factor GTPase family. LepA subfamily.

The protein localises to the cell inner membrane. It catalyses the reaction GTP + H2O = GDP + phosphate + H(+). Functionally, required for accurate and efficient protein synthesis under certain stress conditions. May act as a fidelity factor of the translation reaction, by catalyzing a one-codon backward translocation of tRNAs on improperly translocated ribosomes. Back-translocation proceeds from a post-translocation (POST) complex to a pre-translocation (PRE) complex, thus giving elongation factor G a second chance to translocate the tRNAs correctly. Binds to ribosomes in a GTP-dependent manner. The chain is Elongation factor 4 from Burkholderia multivorans (strain ATCC 17616 / 249).